A 619-amino-acid chain; its full sequence is MPAYRSKTSTAGRNMAGARSLWRATGMKDEDFSKPIIAVVNSFTQFVPGHVHLKDLGQLVAREIEAAGGVAKEFNTIAVDDGIAMGHDGMLYSLPSRDIIADSVEYMVNAHCADAMVCISNCDKITPGMLMAAMRLNIPVVFVSGGPMEAGKTRLANPVTKTIEFKKLDLVDAMVIAADDKYSDADVAEVERSACPTCGSCSGMFTANSMNCLTEALGLSLPGNGTVVATHADREQLFKRAGRRIVELARRYYEQDDERVLPRSVGFKAFENAMTLDIAMGGSTNTILHLLAIAQEAGIDFTMADIDRLSRVVPQLCKVAPNTNKYHIEDVHRAGGIMAILGELDRAGRLHTDAPTVHAPTLGDALAQWDITRTQDEAVRHFYMAGPAGIPTQVAFSQNTRWPSLDLDRAEGCIRSVEHAFSKEGGLAVLRGNIALDGCVVKTAGVDESIHVFEGTAHVTESQDEAVENILADKVKAGDIVIVRYEGPKGGPGMQEMLYPTSYIKSKGLGKACALLTDGRFSGGTSGLSIGHCSPEAAAGGAIGLVQNGDRIRIDIPNRTIDVLVSDEELARRRAEQDAKGWKPAKPRPRKVSAALKAYAKLVMSADKGAVRDLSLLDD.

Mg(2+) is bound at residue Asp-81. Cys-122 lines the [2Fe-2S] cluster pocket. Asp-123 and Lys-124 together coordinate Mg(2+). N6-carboxylysine is present on Lys-124. Cys-201 contacts [2Fe-2S] cluster. Mg(2+) is bound at residue Glu-496. Ser-522 serves as the catalytic Proton acceptor.

Belongs to the IlvD/Edd family. As to quaternary structure, homodimer. Requires [2Fe-2S] cluster as cofactor. Mg(2+) is required as a cofactor.

It catalyses the reaction (2R)-2,3-dihydroxy-3-methylbutanoate = 3-methyl-2-oxobutanoate + H2O. It carries out the reaction (2R,3R)-2,3-dihydroxy-3-methylpentanoate = (S)-3-methyl-2-oxopentanoate + H2O. The protein operates within amino-acid biosynthesis; L-isoleucine biosynthesis; L-isoleucine from 2-oxobutanoate: step 3/4. It functions in the pathway amino-acid biosynthesis; L-valine biosynthesis; L-valine from pyruvate: step 3/4. In terms of biological role, functions in the biosynthesis of branched-chain amino acids. Catalyzes the dehydration of (2R,3R)-2,3-dihydroxy-3-methylpentanoate (2,3-dihydroxy-3-methylvalerate) into 2-oxo-3-methylpentanoate (2-oxo-3-methylvalerate) and of (2R)-2,3-dihydroxy-3-methylbutanoate (2,3-dihydroxyisovalerate) into 2-oxo-3-methylbutanoate (2-oxoisovalerate), the penultimate precursor to L-isoleucine and L-valine, respectively. The protein is Dihydroxy-acid dehydratase of Paracidovorax citrulli (strain AAC00-1) (Acidovorax citrulli).